We begin with the raw amino-acid sequence, 421 residues long: Replication factor C large subunit (421 aa).

63–70 (GPPGIGKT) lines the ATP pocket.

Belongs to the activator 1 small subunits family. RfcL subfamily. Heteromultimer composed of small subunits (RfcS) and large subunits (RfcL).

Its function is as follows. Part of the RFC clamp loader complex which loads the PCNA sliding clamp onto DNA. This is Replication factor C large subunit from Pyrobaculum calidifontis (strain DSM 21063 / JCM 11548 / VA1).